Here is a 471-residue protein sequence, read N- to C-terminus: Alpha-galactosidase (471 aa).

Positions 1-18 (MFNLNFFNYTCHCEWCFW) are cleaved as a signal peptide. Residues C42 and C74 are joined by a disulfide bond. An N-linked (GlcNAc...) asparagine glycan is attached at N43. 2 residues coordinate substrate: D72 and D73. N-linked (GlcNAc...) asparagine glycosylation occurs at N105. C121 and C151 form a disulfide bridge. K147 serves as a coordination point for substrate. The active-site Nucleophile is the D149. N175 carries N-linked (GlcNAc...) asparagine glycosylation. R205 lines the substrate pocket. D209 functions as the Proton donor in the catalytic mechanism. Cystine bridges form between C221–C237 and C223–C230. Residue Q251 participates in substrate binding. 6 N-linked (GlcNAc...) asparagine glycosylation sites follow: N270, N370, N403, N417, N422, and N454.

Belongs to the glycosyl hydrolase 27 family. As to quaternary structure, homotetramer.

It localises to the secreted. The catalysed reaction is Hydrolysis of terminal, non-reducing alpha-D-galactose residues in alpha-D-galactosides, including galactose oligosaccharides, galactomannans and galactolipids.. The chain is Alpha-galactosidase (MEL) from Saccharomyces paradoxus (Yeast).